Reading from the N-terminus, the 428-residue chain is Hydrolase acrC (428 aa).

Residue Ser-248 is part of the active site.

It belongs to the AB hydrolase superfamily. FUS2 hydrolase family.

Its pathway is secondary metabolite biosynthesis. In terms of biological role, hydrolase; part of the cluster that mediates the biosynthesis of acurin A, a highly reduced polyketide coupled to a serine via a peptide bond. The activities of the highly reducing polyketide synthase acrA and the nonribosomal peptide synthetase acrB are collectively responsible for the synthesis of the acurin A core structure with a heptaketide backbone produced by acrA covalently fused to a L-serine by acrB. After the formation of the PK-NRP hybrid product, it is detached from acrB by reductive release to set up the formation of the lactam ring by aldol condensation. The hydrolyase acrC then catalyzes water loss to generate a double bond in the ring. This double bond is probably reduced, which is followed by three oxidations at C-22 to generate the carboxylic acid moiety, involving probably the FAD-binding monooxygenase acrE and the cytochrome P450 monooxygenases acrD and acrF. Finally, a last methylation step performed by the O-methyltransferase acrG leads to the production of acurin A. In Aspergillus aculeatus (strain ATCC 16872 / CBS 172.66 / WB 5094), this protein is Hydrolase acrC.